Consider the following 119-residue polypeptide: Autophagy-related protein 8h (119 aa).

The Phosphatidylethanolamine amidated glycine moiety is linked to residue glycine 119.

It belongs to the ATG8 family. Interacts with ATG4. Interacts with ATI1. In terms of processing, gly-119 forms then a thioester bond with the 'Cys-558' of ATG7 (E1-like activating enzyme) before being transferred to the 'Cys-258' of ATG3 (the specific E2 conjugating enzyme), in order to be finally amidated with phosphatidylethanolamine. This lipid modification anchors ATG8 to autophagosomes. As to expression, constitutively expressed.

The protein resides in the cytoplasmic vesicle. The protein localises to the autophagosome membrane. It localises to the vacuole membrane. It is found in the cytoplasm. Its subcellular location is the cytoskeleton. In terms of biological role, ubiquitin-like modifier involved in autophagosomes formation. May mediate the delivery of the autophagosomes to the vacuole via the microtubule cytoskeleton. In Arabidopsis thaliana (Mouse-ear cress), this protein is Autophagy-related protein 8h (ATG8H).